A 110-amino-acid polypeptide reads, in one-letter code: Nucleoid-associated protein Tola_2216 (110 aa).

This sequence belongs to the YbaB/EbfC family. Homodimer.

The protein localises to the cytoplasm. It localises to the nucleoid. Binds to DNA and alters its conformation. May be involved in regulation of gene expression, nucleoid organization and DNA protection. In Tolumonas auensis (strain DSM 9187 / NBRC 110442 / TA 4), this protein is Nucleoid-associated protein Tola_2216.